The chain runs to 1158 residues: ATP-dependent helicase/deoxyribonuclease subunit B (1158 aa).

One can recognise a UvrD-like helicase ATP-binding domain in the interval 1-275; the sequence is MTLHAYLGRA…QYFNQLYRFN (275 aa). 8–15 lines the ATP pocket; sequence GRAGTGKS. A UvrD-like helicase C-terminal domain is found at 269–583; it reads NQLYRFNNQD…SIGTMDLAKV (315 aa). Residues Cys784, Cys1112, Cys1115, and Cys1121 each contribute to the [4Fe-4S] cluster site.

The protein belongs to the helicase family. AddB/RexB type 1 subfamily. In terms of assembly, heterodimer of AddA and AddB. Mg(2+) is required as a cofactor. Requires [4Fe-4S] cluster as cofactor.

Its function is as follows. The heterodimer acts as both an ATP-dependent DNA helicase and an ATP-dependent, dual-direction single-stranded exonuclease. Recognizes the chi site generating a DNA molecule suitable for the initiation of homologous recombination. The AddB subunit has 5' -&gt; 3' nuclease activity but not helicase activity. This is ATP-dependent helicase/deoxyribonuclease subunit B from Staphylococcus aureus (strain MW2).